The chain runs to 91 residues: Small ribosomal subunit protein uS19 (91 aa).

The protein belongs to the universal ribosomal protein uS19 family.

Protein S19 forms a complex with S13 that binds strongly to the 16S ribosomal RNA. This chain is Small ribosomal subunit protein uS19, found in Dechloromonas aromatica (strain RCB).